Here is a 173-residue protein sequence, read N- to C-terminus: Acireductone dioxygenase 1 (173 aa).

4 residues coordinate Fe(2+): His-96, His-98, Glu-102, and His-140. Positions 96, 98, 102, and 140 each coordinate Ni(2+).

Belongs to the acireductone dioxygenase (ARD) family. As to quaternary structure, monomer. The cofactor is Fe(2+). Requires Ni(2+) as cofactor.

It catalyses the reaction 1,2-dihydroxy-5-(methylsulfanyl)pent-1-en-3-one + O2 = 3-(methylsulfanyl)propanoate + CO + formate + 2 H(+). The catalysed reaction is 1,2-dihydroxy-5-(methylsulfanyl)pent-1-en-3-one + O2 = 4-methylsulfanyl-2-oxobutanoate + formate + 2 H(+). It functions in the pathway amino-acid biosynthesis; L-methionine biosynthesis via salvage pathway; L-methionine from S-methyl-5-thio-alpha-D-ribose 1-phosphate: step 5/6. In terms of biological role, catalyzes 2 different reactions between oxygen and the acireductone 1,2-dihydroxy-3-keto-5-methylthiopentene (DHK-MTPene) depending upon the metal bound in the active site. Fe-containing acireductone dioxygenase (Fe-ARD) produces formate and 2-keto-4-methylthiobutyrate (KMTB), the alpha-ketoacid precursor of methionine in the methionine recycle pathway. Ni-containing acireductone dioxygenase (Ni-ARD) produces methylthiopropionate, carbon monoxide and formate, and does not lie on the methionine recycle pathway. In Pectobacterium atrosepticum (strain SCRI 1043 / ATCC BAA-672) (Erwinia carotovora subsp. atroseptica), this protein is Acireductone dioxygenase 1.